The following is a 690-amino-acid chain: MKKPLRTSLLMLCLATPLAALAAGVDEAAIRATEQAGGEWLSHGRTYAEQRFSPLKQIDASNVRSLGLAWYMDLDNTRGLEATPLFHDGVIYTSMSWSRVIAVDAASGKELWRYDPEVAKVKARTSCCDAVNRGVALWGDKVYVGTLDGRLIALDAKTGKAIWSQQTTDPAKPYSITGAPRVVKGKVIIGNGGAEYGVRGFVSAYDADTGKLAWRFYTVPGDPALPYEHPELREAAKTWQGDQYWKLGGGGTVWDSMAYDPELDLLYVGTGNGSPWNREVRSPGGGDNLYLSSILAIRPDTGKLAWHYQVTPGDSWDFTATQQITLAELNIDGKPRKVLMQAPKNGFFYVLDRTNGKLISAEKFGKVTWAEKVDLATGRPVEAPGVRYEKEPIVMWPSPFGAHNWHSMSFNPGTGLVYIPYQEVPGVYRNEGKDFVTRKAFNTAAGFADATDVPAAVVSGALLAWDPVKQKAAWKVPYPTHWNGGTLSTAGNLVFQGTAAGQMHAYSADKGEALWQFEAQSGIVAAPMTFELAGRQYVAIMAGWGGVATLTGGESMNLPGMKNRSRLLVFALDGKAQLPPPAPAPAKVERVPQPVTAAPEQVQAGKQLYGQFCSVCHGMGTISGGLIPDLRQSSDATREHFQQIVLQGALKPLGMPSFDDSLKPEEVEQIKLYVMSREYEDYMARHKAAP.

Positions 1-22 (MKKPLRTSLLMLCLATPLAALA) are cleaved as a signal peptide. E81 serves as a coordination point for pyrroloquinoline quinone. A disulfide bond links C127 and C128. Pyrroloquinoline quinone contacts are provided by residues R133, T177, and 193–194 (GA). A Ca(2+)-binding site is contributed by E195. T252 contributes to the pyrroloquinoline quinone binding site. The Ca(2+) site is built by N272 and D317. The Proton acceptor role is filled by D317. Pyrroloquinoline quinone-binding positions include K344, 404–405 (NW), and V547. In terms of domain architecture, Cytochrome c spans 600-678 (EQVQAGKQLY…QIKLYVMSRE (79 aa)). Residues C613, C616, H617, and M655 each coordinate heme c.

This sequence belongs to the bacterial PQQ dehydrogenase family. In terms of assembly, monomer. Requires pyrroloquinoline quinone as cofactor. Ca(2+) is required as a cofactor. It depends on heme c as a cofactor.

The protein resides in the periplasm. It catalyses the reaction 2 oxidized [azurin] + a primary alcohol = 2 reduced [azurin] + an aldehyde + 2 H(+). Its activity is regulated as follows. Inhibited by 10 mM 1-butanol. Its function is as follows. Catalyzes the dye-linked oxidation of primary alcohols to the corresponding aldehydes and the (subsequent) oxidation of the aldehydes to carboxylic acids. Exhibits activity with longer mono-alcohols (C-4 to C-7) but not with methanol or glycerol. Reacts with 1,2-propanediol and 1,3-propanediol but not with sugar alcohols such as D-sorbitol. In Pseudomonas putida (Arthrobacter siderocapsulatus), this protein is Quinohemoprotein alcohol dehydrogenase ADH IIB.